Reading from the N-terminus, the 310-residue chain is GMP synthase [glutamine-hydrolyzing] subunit B (310 aa).

In terms of domain architecture, GMPS ATP-PPase spans 1 to 187 (MSFSDYISRI…LGLPTDIQPF (187 aa)). Residue 27 to 33 (SGGQDSS) participates in ATP binding.

In terms of assembly, heterodimer composed of a glutamine amidotransferase subunit (A) and a GMP-binding subunit (B).

The enzyme catalyses XMP + L-glutamine + ATP + H2O = GMP + L-glutamate + AMP + diphosphate + 2 H(+). It functions in the pathway purine metabolism; GMP biosynthesis; GMP from XMP (L-Gln route): step 1/1. Its function is as follows. Catalyzes the synthesis of GMP from XMP. The polypeptide is GMP synthase [glutamine-hydrolyzing] subunit B (guaAB) (Thermoplasma volcanium (strain ATCC 51530 / DSM 4299 / JCM 9571 / NBRC 15438 / GSS1)).